Consider the following 385-residue polypeptide: Odorant receptor 82a (385 aa).

The Cytoplasmic portion of the chain corresponds to 1–32; the sequence is MGRLFQLQEYCLRAMGHKDDMDSTDSTALSLK. The helical transmembrane segment at 33 to 53 threads the bilayer; it reads HISSLIFVISAQYPLISYVAY. Over 54–62 the chain is Extracellular; the sequence is NRNDMEKVT. The helical transmembrane segment at 63 to 83 threads the bilayer; that stretch reads ACLSVVFTNMLTVIKISTFLA. Topologically, residues 84 to 131 are cytoplasmic; it reads NRKDFWEMIHRFRKMHEQSASHIPRYREGLDYVAEANKLASFLGRAYC. Residues 132-152 traverse the membrane as a helical segment; it reads VSCGLTGLYFMLGPIVKIGVC. Residues 153–186 lie on the Extracellular side of the membrane; it reads RWHGTTCDKELPMPMKFPFNDLESPGYEVCFLYT. Residues 187 to 207 traverse the membrane as a helical segment; that stretch reads VLVTVVVVAYASAVDGLFISF. Residues 208–257 are Cytoplasmic-facing; sequence AINLRAHFQTLQRQIENWEFPSSEPDTQIRLKSIVEYHVLLLSLSRKLRS. A helical transmembrane segment spans residues 258 to 278; that stretch reads IYTPTVMGQFVITSLQVGVII. At 279–290 the chain is on the extracellular side; it reads YQLVTNMDSVMD. Residues 291-311 traverse the membrane as a helical segment; that stretch reads LLLYASFFGSIMLQLFIYCYG. The Cytoplasmic segment spans residues 312–357; sequence GEIIKAESLQVDTAVRLSNWHLASPKTRTSLSLIILQSQKEVLIRA. The chain crosses the membrane as a helical span at residues 358–378; it reads GFFVASLANFVGICRTALSLI. Residues 379-385 are Extracellular-facing; it reads TLIKSIE.

It belongs to the insect chemoreceptor superfamily. Heteromeric odorant receptor channel (TC 1.A.69) family. Or1a subfamily. In terms of assembly, interacts with Orco. Complexes exist early in the endomembrane system in olfactory sensory neurons (OSNs), coupling these complexes to the conserved ciliary trafficking pathway. Expressed in olfactory sensory neurons in the antenna.

The protein localises to the cell membrane. Functionally, odorant receptor which mediates acceptance or avoidance behavior, depending on its substrates. The odorant receptor repertoire encodes a large collection of odor stimuli that vary widely in identity, intensity, and duration. May form a complex with Orco to form odorant-sensing units, providing sensitive and prolonged odorant signaling and calcium permeability. This is Odorant receptor 82a (Or82a) from Drosophila melanogaster (Fruit fly).